The following is a 195-amino-acid chain: NADH-quinone oxidoreductase subunit C (195 aa).

It belongs to the complex I 30 kDa subunit family. In terms of assembly, NDH-1 is composed of 14 different subunits. Subunits NuoB, C, D, E, F, and G constitute the peripheral sector of the complex.

It localises to the cell inner membrane. The enzyme catalyses a quinone + NADH + 5 H(+)(in) = a quinol + NAD(+) + 4 H(+)(out). NDH-1 shuttles electrons from NADH, via FMN and iron-sulfur (Fe-S) centers, to quinones in the respiratory chain. The immediate electron acceptor for the enzyme in this species is believed to be ubiquinone. Couples the redox reaction to proton translocation (for every two electrons transferred, four hydrogen ions are translocated across the cytoplasmic membrane), and thus conserves the redox energy in a proton gradient. The sequence is that of NADH-quinone oxidoreductase subunit C from Laribacter hongkongensis (strain HLHK9).